The chain runs to 696 residues: Neurogenic protein big brain (696 aa).

Topologically, residues 1-71 (MADESLHTVP…LEFWRSIISE (71 aa)) are cytoplasmic. Ser46 carries the post-translational modification Phosphoserine. Thr47 is modified (phosphothreonine). Residues 72-93 (CLASFMYVFIVCGAAAGVGVGA) form a helical membrane-spanning segment. Over 94-97 (SVSS) the chain is Extracellular. A helical transmembrane segment spans residues 98 to 118 (VLLATALASGLAMATLTQCFL). Residues 119–143 (HISGAHINPAVTLALCVVRSISPIR) lie on the Cytoplasmic side of the membrane. The short motif at 126–128 (NPA) is the NPA 1 element. Residues 144-167 (AAMYITAQCGGGIAGAALLYGVTV) traverse the membrane as a helical segment. At 168–189 (PGYQGNLQAAISHSAALAAWER) the chain is on the extracellular side. The chain crosses the membrane as a helical span at residues 190 to 208 (FGVEFILTFLVVLCYFVST). At 209-213 (DPMKK) the chain is on the cytoplasmic side. The chain crosses the membrane as a helical span at residues 214-234 (FMGNSAASIGCAYSACCFVSM). Topologically, residues 235–256 (PYLNPARSLGPSFVLNKWDSHW) are extracellular. The NPA 2 motif lies at 238–240 (NPA). The helical transmembrane segment at 257–273 (VYWFGPLVGGMASGLVY) threads the bilayer. Residue Tyr273 is modified to Phosphotyrosine; by Src. Topologically, residues 274–696 (EYIFNSRNRN…HYGMLPLRPN (423 aa)) are cytoplasmic. Ser300 carries the phosphoserine modification. Residues 314-345 (NKYQQSQGTYPRGQSNGNGGGQAAGNGQHQAA) are disordered. Position 367 is a phosphotyrosine; by Abl (Tyr367). A Phosphotyrosine; by Src modification is found at Tyr384. Ser394 carries the post-translational modification Phosphoserine. Disordered regions lie at residues 436-634 (MRTQ…KVSA) and 650-696 (TSQG…LRPN). Low complexity-rich tracts occupy residues 439–451 (QQQQ…QQQQ) and 462–472 (QNQNVQNQMQQ). Tyr478 carries the phosphotyrosine; by Src modification. The segment covering 487–532 (QQQPIQQQQQQQQQQQLQQQQPNMGVQQQQMQPPPQMMSDPQQQPQ) has biased composition (low complexity). The span at 549-558 (GNHKYDRRDP) shows a compositional bias: basic and acidic residues. Ser576 is modified (phosphoserine). Residues 576 to 587 (SDDSSYGSYHGS) show a composition bias toward low complexity. The segment covering 599 to 616 (EPSPPPPPMLMYAPPPQP) has biased composition (pro residues). Tyr610 is modified (phosphotyrosine; by Abl). A compositionally biased stretch (low complexity) spans 659-686 (QQQQQQQQQQQQQQQQQQQQMMMQQQQQ).

Belongs to the MIP/aquaporin (TC 1.A.8) family. Phosphorylated at its C-terminus. Detected in all tissues with neurogenic abilities, for example the neurogenic ectoderm.

The protein localises to the membrane. Essential for proper differentiation of ectoderm. Acts synergistically with neurogenic locus proteins Notch and Delta during the separation of neural and epidermal cell lineages in response to the lateral inhibition signal. Voltage-insensitive monovalent cation channel. Ion transport is blocked by the presence of divalent cations. The sequence is that of Neurogenic protein big brain (bib) from Drosophila melanogaster (Fruit fly).